A 409-amino-acid polypeptide reads, in one-letter code: Regulator of Ty1 transposition protein 103 (409 aa).

One can recognise a CID domain in the interval 1–135; that stretch reads MPFSSEQFTT…DIERSLKTES (135 aa). Residues 250–409 form a disordered region; it reads LNKNVDEDNI…IQDLLSKLAN (160 aa). Acidic residues predominate over residues 266-289; the sequence is GDGDDDDDDGDNDDDDDDDDDDKN. Basic and acidic residues-rich tracts occupy residues 307–323, 337–363, and 370–380; these read TDKK…EHKN, RTHD…KTSE, and EDGHYELDIEG.

The protein belongs to the UPF0400 (RTT103) family. In terms of assembly, interacts with PCF11, RAI1, RAT1, RPO21 and RBP2.

The protein localises to the nucleus. In terms of biological role, involved in transcription termination by RNA polymerase II and in regulation of Ty1 transposition. This chain is Regulator of Ty1 transposition protein 103 (RTT103), found in Saccharomyces cerevisiae (strain ATCC 204508 / S288c) (Baker's yeast).